Consider the following 340-residue polypeptide: Ava biosynthesis cluster protein G (340 aa).

4 consecutive transmembrane segments (helical) span residues 15–35 (WSAFWLWAIIGGYFAAFNIWN), 81–101 (FMISTDFITSACSVIALLQFV), 118–138 (AFFVMMGFGAPSGIMVAVHAF), and 148–168 (LSIMLTGVLTICFLATSFLCI). An N-linked (GlcNAc...) asparagine glycan is attached at asparagine 171. 2 helical membrane-spanning segments follow: residues 219 to 239 (FSSVYLIIPEVMNWTLGYVAF) and 315 to 335 (SALTAVCLLLRYVGLILWLQI).

Its subcellular location is the membrane. It participates in secondary metabolite biosynthesis. Part of the cluster that mediates the biosynthesis of a highly modified cyclo-arginine-tryptophan dipeptide (cRW). The first step of the pathway is perfornmed by the arginine-containing cyclodipeptide synthase (RCPDS) avaA that acts as the scaffold-generating enzyme and is responsible for formation of the cyclo-Arg-Trp (cRW) diketopiperazine. AvaB then acts as a multifunctional flavoenzyme that is responsible for generating the cyclo-Arg-formylkynurenine DKP, which can be deformylated by avaC. AvaB then further catalyzes an additional N-oxidation followed by cyclization and dehydration. The next step is an N-acetylation of the guanidine group catalyzed by the arginine N-acetyltransferase avaD. The roles of the additional enzymes identified within the ava cluster still have to be determined. In Aspergillus versicolor, this protein is Ava biosynthesis cluster protein G.